A 277-amino-acid polypeptide reads, in one-letter code: Undecaprenyl-diphosphatase (277 aa).

Helical transmembrane passes span 47–67 (FNIIIQLAAILAVVWEFRGKI), 85–105 (VNLLIAFFPAVILGVLFADLI), 108–128 (WLFNPITVALALVVGGVIMLW), 183–203 (AATEFSFFLAMPTMVGAAVYS), 218–238 (VFAVGFVTSFVFAMVAVRALL), and 249–269 (FAWYRIAFGLLILATWQFHLI).

It belongs to the UppP family.

It localises to the cell inner membrane. The catalysed reaction is di-trans,octa-cis-undecaprenyl diphosphate + H2O = di-trans,octa-cis-undecaprenyl phosphate + phosphate + H(+). Catalyzes the dephosphorylation of undecaprenyl diphosphate (UPP). Confers resistance to bacitracin. The sequence is that of Undecaprenyl-diphosphatase from Pseudomonas paraeruginosa (strain DSM 24068 / PA7) (Pseudomonas aeruginosa (strain PA7)).